The sequence spans 333 residues: Phosphate acyltransferase (333 aa).

It belongs to the PlsX family. As to quaternary structure, homodimer. Probably interacts with PlsY.

The protein localises to the cytoplasm. It carries out the reaction a fatty acyl-[ACP] + phosphate = an acyl phosphate + holo-[ACP]. Its pathway is lipid metabolism; phospholipid metabolism. Catalyzes the reversible formation of acyl-phosphate (acyl-PO(4)) from acyl-[acyl-carrier-protein] (acyl-ACP). This enzyme utilizes acyl-ACP as fatty acyl donor, but not acyl-CoA. The sequence is that of Phosphate acyltransferase from Helicobacter hepaticus (strain ATCC 51449 / 3B1).